A 280-amino-acid polypeptide reads, in one-letter code: MAFGLIGRVVGTKSSRLSTAARLIPARWTSTGSEAQSKASTGGGGASLKTFQIYRWNPDNPGKPELQDYKIDLKDCGPMVLDALIKIKNEMDPSLTFRRSCREGICGSCAMNIDGCNGLACLTKIESGSKETTITPLPHMFVIKDLVVDMTNFYNQYKSIEPWLKRKNPASVPGKEILQSKKDRAKLDGMYECILCACCSTSCPSYWWNPESYLGPAALLHANRWISDSRDEYTKERLEAIDDEFKLYRCHTILNCARACPKGLNPGKQITHIKQLQKSG.

The N-terminal 28 residues, 1 to 28, are a transit peptide targeting the mitochondrion; that stretch reads MAFGLIGRVVGTKSSRLSTAARLIPARW. One can recognise a 2Fe-2S ferredoxin-type domain in the interval 51 to 140; that stretch reads FQIYRWNPDN…ETTITPLPHM (90 aa). Residues Cys101, Cys106, and Cys121 each contribute to the [2Fe-2S] cluster site. One can recognise a 4Fe-4S ferredoxin-type domain in the interval 183–213; the sequence is DRAKLDGMYECILCACCSTSCPSYWWNPESY. Cys193, Cys196, and Cys199 together coordinate [4Fe-4S] cluster. [3Fe-4S] cluster is bound at residue Cys203. Trp208 lines the a ubiquinone pocket. Residues Cys250 and Cys256 each coordinate [3Fe-4S] cluster. Cys260 provides a ligand contact to [4Fe-4S] cluster.

The protein belongs to the succinate dehydrogenase/fumarate reductase iron-sulfur protein family. In terms of assembly, component of complex II composed of eight subunits in plants: four classical SDH subunits SDH1, SDH2, SDH3 and SDH4 (a flavoprotein (FP), an iron-sulfur protein (IP), and a cytochrome b composed of a large and a small subunit.), as well as four subunits unknown in mitochondria from bacteria and heterotrophic eukaryotes. [2Fe-2S] cluster is required as a cofactor. It depends on [3Fe-4S] cluster as a cofactor. The cofactor is [4Fe-4S] cluster. As to expression, ubiquitous. Preferentially expressed in flowers, inflorescences and root tips.

The protein localises to the mitochondrion inner membrane. The catalysed reaction is a quinone + succinate = fumarate + a quinol. It functions in the pathway carbohydrate metabolism; tricarboxylic acid cycle; fumarate from succinate (eukaryal route): step 1/1. Iron-sulfur protein (IP) subunit of succinate dehydrogenase (SDH) that is involved in complex II of the mitochondrial electron transport chain and is responsible for transferring electrons from succinate to ubiquinone (coenzyme Q). In Arabidopsis thaliana (Mouse-ear cress), this protein is Succinate dehydrogenase [ubiquinone] iron-sulfur subunit 2, mitochondrial (SDH2-2).